The chain runs to 277 residues: NH(3)-dependent NAD(+) synthetase (277 aa).

36–43 (GLSGGIDS) is a binding site for ATP. Aspartate 42 lines the Mg(2+) pocket. Arginine 118 is a binding site for deamido-NAD(+). Threonine 138 contacts ATP. Glutamate 143 lines the Mg(2+) pocket. ATP is bound by residues lysine 167 and serine 189.

Belongs to the NAD synthetase family. As to quaternary structure, homodimer.

The enzyme catalyses deamido-NAD(+) + NH4(+) + ATP = AMP + diphosphate + NAD(+) + H(+). Its pathway is cofactor biosynthesis; NAD(+) biosynthesis; NAD(+) from deamido-NAD(+) (ammonia route): step 1/1. Functionally, catalyzes the ATP-dependent amidation of deamido-NAD to form NAD. Uses ammonia as a nitrogen source. The polypeptide is NH(3)-dependent NAD(+) synthetase (Chlorobaculum parvum (strain DSM 263 / NCIMB 8327) (Chlorobium vibrioforme subsp. thiosulfatophilum)).